Consider the following 302-residue polypeptide: Ribosomal RNA small subunit methyltransferase H (302 aa).

S-adenosyl-L-methionine-binding positions include 34–36, aspartate 53, phenylalanine 80, aspartate 101, and glutamine 108; that span reads AGH. The disordered stretch occupies residues 283-302; the sequence is LEENPRSKSAKMRVLKKIER. Residues 290–302 show a composition bias toward basic residues; the sequence is KSAKMRVLKKIER.

Belongs to the methyltransferase superfamily. RsmH family.

The protein resides in the cytoplasm. The enzyme catalyses cytidine(1402) in 16S rRNA + S-adenosyl-L-methionine = N(4)-methylcytidine(1402) in 16S rRNA + S-adenosyl-L-homocysteine + H(+). In terms of biological role, specifically methylates the N4 position of cytidine in position 1402 (C1402) of 16S rRNA. The polypeptide is Ribosomal RNA small subunit methyltransferase H (Mycoplasma mobile (strain ATCC 43663 / 163K / NCTC 11711) (Mesomycoplasma mobile)).